The sequence spans 199 residues: Recombination protein RecR (199 aa).

Residues 57–72 (CEICGNMDTENICRIC) form a C4-type zinc finger. Positions 80-175 (SVIAIVETVA…KISRLASGIP (96 aa)) constitute a Toprim domain.

This sequence belongs to the RecR family.

Its function is as follows. May play a role in DNA repair. It seems to be involved in an RecBC-independent recombinational process of DNA repair. It may act with RecF and RecO. This Rickettsia canadensis (strain McKiel) protein is Recombination protein RecR.